The following is a 432-amino-acid chain: uncharacterized protein (432 aa).

SIS domains follow at residues 105–244 (WLTE…DLVS) and 277–422 (CDKK…VDLP).

This is an uncharacterized protein from Saccharomyces cerevisiae (strain ATCC 204508 / S288c) (Baker's yeast).